The primary structure comprises 192 residues: Acireductone dioxygenase 2 (192 aa).

Positions 99, 101, 105, and 144 each coordinate Fe(2+). Ni(2+) contacts are provided by His99, His101, Glu105, and His144.

It belongs to the acireductone dioxygenase (ARD) family. It depends on Fe(2+) as a cofactor. Ni(2+) is required as a cofactor.

The protein resides in the cytoplasm. It is found in the nucleus. The enzyme catalyses 1,2-dihydroxy-5-(methylsulfanyl)pent-1-en-3-one + O2 = 4-methylsulfanyl-2-oxobutanoate + formate + 2 H(+). It carries out the reaction 1,2-dihydroxy-5-(methylsulfanyl)pent-1-en-3-one + O2 = 3-(methylsulfanyl)propanoate + CO + formate + 2 H(+). It functions in the pathway amino-acid biosynthesis; L-methionine biosynthesis via salvage pathway; L-methionine from S-methyl-5-thio-alpha-D-ribose 1-phosphate: step 5/6. In terms of biological role, catalyzes 2 different reactions between oxygen and the acireductone 1,2-dihydroxy-3-keto-5-methylthiopentene (DHK-MTPene) depending upon the metal bound in the active site. Fe-containing acireductone dioxygenase (Fe-ARD) produces formate and 2-keto-4-methylthiobutyrate (KMTB), the alpha-ketoacid precursor of methionine in the methionine recycle pathway. Ni-containing acireductone dioxygenase (Ni-ARD) produces methylthiopropionate, carbon monoxide and formate, and does not lie on the methionine recycle pathway. This chain is Acireductone dioxygenase 2 (ARD2), found in Arabidopsis thaliana (Mouse-ear cress).